Here is a 408-residue protein sequence, read N- to C-terminus: MSDRGSDQSSSSSDSAQHIPPKAQTILTDQRSLRTCILLQHLQGKDPMEGYNLLCKSLGPKFMEYSHFNYWFMGLADETLTLDSADRFNASQVKQCIDLPDNHPAMASKTVLQTNRFSTVGDAHRSQSNIREGRNVKGIFLSFENSELAFDDDISFDNEQDDDGCIVEVEYKDDKKKTISKKKWSLKFAMKDLSAHLNGKKLVLDDFVVIMGGWRIAQDQEKWFEALQSILHSNGTVSAKCVSFVSFMTSYQTAQFLKHFESGFLERISIDADDASVEKIVCLEQYKQATSLSLGSGMFSEFFKHIDHFKSLKFCFFGKRLSKNHIELFRDNVIAKSVNLESCTFEHLDFSEKSFLTAFNAPKSATGSFVYKANKRSFTITSEGFAYHIKKNSSNLSTIKNSFPSDFF.

Residues 1 to 22 (MSDRGSDQSSSSSDSAQHIPPK) are disordered.

This sequence belongs to the FTH family.

In Caenorhabditis elegans, this protein is F-box A protein 155 (fbxa-155).